The chain runs to 218 residues: Peroxiredoxin-like 2A (218 aa).

Residues 3-101 (MWSIGVGAVG…DELGVPLYAV (99 aa)) form a thioredoxin-like fold region. Catalysis depends on redox-active residues C74 and C77.

It belongs to the peroxiredoxin-like PRXL2 family. PRXL2A subfamily. In terms of tissue distribution, expressed in kidney, liver, skin, and brain. Widely expressed with highest levels detected in adipose tissue.

The protein localises to the cytoplasm. It is found in the secreted. Functionally, involved in redox regulation of the cell. Acts as an antioxidant. Inhibits TNFSF11-induced NFKB1 and JUN activation and osteoclast differentiation. May affect bone resorption and help to maintain bone mass. Acts as a negative regulator of macrophage-mediated inflammation by inhibiting macrophage production of inflammatory cytokines, probably through suppression of the MAPK signaling pathway. The sequence is that of Peroxiredoxin-like 2A (Prxl2a) from Mus musculus (Mouse).